The primary structure comprises 940 residues: Serine/threonine-protein kinase PLK4 (940 aa).

The region spanning 12-265 (FKVLTLLGKG…LSAVLDHPFM (254 aa)) is the Protein kinase domain. ATP contacts are provided by residues 18 to 26 (LGKGSFACV) and Lys41. Catalysis depends on Asp136, which acts as the Proton acceptor. 2 disordered regions span residues 262–353 (HPFM…DLSR) and 409–529 (RLFP…DAFV). A compositionally biased stretch (low complexity) spans 273–305 (SKDSGSSNGGSIDSGIATISTASNATNNSSSSR). 3 stretches are compositionally biased toward polar residues: residues 337 to 349 (FKSGQDWQPNSQD), 440 to 465 (NPASSFSTSTHSTRQQMPDSQTQPWF), and 494 to 519 (GTQTSCSDKPSGLHSQQQPILFQHNN). The Cryptic POLO box 1 (CPB1) domain occupies 563–676 (CLKKSFPPLC…TKFVQLVKSK (114 aa)). In terms of domain architecture, Cryptic POLO box 2 (CPB2) spans 677–791 (TPKVTLYTKF…GRRPVNPVPP (115 aa)). Residues 857-935 (KVLKSIFVPN…LSSILGLLAN (79 aa)) form the POLO box domain.

Belongs to the protein kinase superfamily. Ser/Thr protein kinase family. CDC5/Polo subfamily. Homodimer. Ubiquitinated; leading to its degradation by the proteasome.

It is found in the cytoplasm. The protein resides in the cytoskeleton. Its subcellular location is the microtubule organizing center. It localises to the centrosome. The protein localises to the centriole. It carries out the reaction L-seryl-[protein] + ATP = O-phospho-L-seryl-[protein] + ADP + H(+). The catalysed reaction is L-threonyl-[protein] + ATP = O-phospho-L-threonyl-[protein] + ADP + H(+). In terms of biological role, serine/threonine-protein kinase that plays a central role in centriole duplication. Able to trigger procentriole formation on the surface of the parental centriole cylinder, leading to the recruitment of centriole biogenesis proteins such as sass6, cpap, ccp110, cep135 and gamma-tubulin. When overexpressed, it is able to induce centrosome amplification through the simultaneous generation of multiple procentrioles adjoining each parental centriole during S phase. Its central role in centriole replication suggests a possible role in tumorigenesis, centrosome aberrations being frequently observed in tumors. Also involved in deuterosome-mediated centriole amplification in multiciliated that can generate more than 100 centrioles. This is Serine/threonine-protein kinase PLK4 from Danio rerio (Zebrafish).